Reading from the N-terminus, the 142-residue chain is Hemoglobin subunit alpha-A (142 aa).

A Globin domain is found at 2–142 (VLSAADKTNV…VGTVLTAKYR (141 aa)). H59 serves as a coordination point for O2. H88 contacts heme b.

The protein belongs to the globin family. In terms of assembly, heterotetramer of two alpha chains and two beta chains. As to expression, red blood cells.

Functionally, involved in oxygen transport from the lung to the various peripheral tissues. In Anser anser anser (Western greylag goose), this protein is Hemoglobin subunit alpha-A (HBAA).